Reading from the N-terminus, the 131-residue chain is MAFTRSIALFAGLALAASSAQEATILGGYTQKNATSDDIELLTQATSSANMYNKNVDTRICLIAIENLETQTVAGTNYKFQVAGCPVETDDELGACDDRNCDYSSYNIVIFSQPWSDTIEVTSITPAEYQG.

A signal peptide spans 1-20 (MAFTRSIALFAGLALAASSA). A glycan (N-linked (GlcNAc...) asparagine) is linked at N33. The Secondary area of contact signature appears at 71 to 75 (QTVAG).

It belongs to the cystatin family.

Its subcellular location is the secreted. Its function is as follows. Secreted effector that interacts with and inhibits host apoplastic pathogenesis-related papain-like cysteine proteases. Inhibition of host proteases by a pathogen extracellular protease inhibitor forms a specific type of defense-counterdefense mechanism between plants and microbial pathogens. This Phytophthora infestans (Potato late blight agent) protein is Cystatin-like cysteine protease inhibitor EPIC3.